Consider the following 43-residue polypeptide: Thymosin beta-12 (43 aa).

Composition is skewed to basic and acidic residues over residues 1–25 (MSDKPDLAEVSNFDKTKLKKTETQE) and 33–43 (ETIEQEKQATA). The interval 1 to 43 (MSDKPDLAEVSNFDKTKLKKTETQEKNPLPTKETIEQEKQATA) is disordered. S2 is modified (N-acetylserine).

It belongs to the thymosin beta family.

The protein localises to the cytoplasm. It localises to the cytoskeleton. Functionally, plays an important role in the organization of the cytoskeleton. Binds to and sequesters actin monomers (G actin) and therefore inhibits actin polymerization. The protein is Thymosin beta-12 of Oncorhynchus mykiss (Rainbow trout).